Here is a 479-residue protein sequence, read N- to C-terminus: Probable xyloglucan galactosyltransferase GT15 (479 aa).

At 1–20 (MKNNNSSSVSIENHPWKKKP) the chain is on the cytoplasmic side. Residues 21-40 (TTLLLFLSLLSISLLLLRLS) form a helical; Signal-anchor for type II membrane protein membrane-spanning segment. The Lumenal segment spans residues 41–479 (QDKIILITTT…GIRRNEFKTD (439 aa)). N-linked (GlcNAc...) asparagine glycans are attached at residues Asn-155, Asn-242, Asn-285, and Asn-391.

Belongs to the glycosyltransferase 47 family. As to expression, expressed in roots, hypocotyls, cotyledons, leaves, stems and sepals.

It localises to the golgi apparatus membrane. Its function is as follows. Functions in xyloglucan synthesis by adding side chains to the xylosylated glucan backbone. Involved in the galactosylation of hemicellulose xyloglucan. This chain is Probable xyloglucan galactosyltransferase GT15, found in Arabidopsis thaliana (Mouse-ear cress).